Here is a 153-residue protein sequence, read N- to C-terminus: UPF0179 protein AF_2154 (153 aa).

The protein belongs to the UPF0179 family.

The polypeptide is UPF0179 protein AF_2154 (Archaeoglobus fulgidus (strain ATCC 49558 / DSM 4304 / JCM 9628 / NBRC 100126 / VC-16)).